A 189-amino-acid polypeptide reads, in one-letter code: Potassium-transporting ATPase KdpC subunit (189 aa).

Residues 10–30 traverse the membrane as a helical segment; that stretch reads LTLVFCVFFSVCYILVLWIFA.

It belongs to the KdpC family. In terms of assembly, the system is composed of three essential subunits: KdpA, KdpB and KdpC.

The protein localises to the cell inner membrane. In terms of biological role, part of the high-affinity ATP-driven potassium transport (or Kdp) system, which catalyzes the hydrolysis of ATP coupled with the electrogenic transport of potassium into the cytoplasm. This subunit acts as a catalytic chaperone that increases the ATP-binding affinity of the ATP-hydrolyzing subunit KdpB by the formation of a transient KdpB/KdpC/ATP ternary complex. This Phocaeicola vulgatus (strain ATCC 8482 / DSM 1447 / JCM 5826 / CCUG 4940 / NBRC 14291 / NCTC 11154) (Bacteroides vulgatus) protein is Potassium-transporting ATPase KdpC subunit.